Reading from the N-terminus, the 232-residue chain is A-type ATP synthase subunit D (232 aa).

It belongs to the V-ATPase D subunit family. Has multiple subunits with at least A(3), B(3), C, D, E, F, H, I and proteolipid K(x).

The protein localises to the cell membrane. In terms of biological role, component of the A-type ATP synthase that produces ATP from ADP in the presence of a proton gradient across the membrane. This is A-type ATP synthase subunit D from Methanopyrus kandleri (strain AV19 / DSM 6324 / JCM 9639 / NBRC 100938).